Consider the following 149-residue polypeptide: UPF0178 protein Sama_3557 (149 aa).

The protein belongs to the UPF0178 family.

This chain is UPF0178 protein Sama_3557, found in Shewanella amazonensis (strain ATCC BAA-1098 / SB2B).